The primary structure comprises 341 residues: GTP 3',8-cyclase (341 aa).

The Radical SAM core domain occupies 11–231; the sequence is QKSRPLRDLR…RIINEDMPIE (221 aa). Arg20 is a binding site for GTP. [4Fe-4S] cluster contacts are provided by Cys27 and Cys31. Tyr33 lines the S-adenosyl-L-methionine pocket. Position 34 (Cys34) interacts with [4Fe-4S] cluster. Residue Arg75 coordinates GTP. Gly79 serves as a coordination point for S-adenosyl-L-methionine. Thr106 contributes to the GTP binding site. Residue Ser130 coordinates S-adenosyl-L-methionine. Residue Lys167 participates in GTP binding. Met201 lines the S-adenosyl-L-methionine pocket. Positions 265 and 268 each coordinate [4Fe-4S] cluster. A GTP-binding site is contributed by 270–272; sequence RAR. Residue Cys282 coordinates [4Fe-4S] cluster.

This sequence belongs to the radical SAM superfamily. MoaA family. In terms of assembly, monomer and homodimer. The cofactor is [4Fe-4S] cluster.

It catalyses the reaction GTP + AH2 + S-adenosyl-L-methionine = (8S)-3',8-cyclo-7,8-dihydroguanosine 5'-triphosphate + 5'-deoxyadenosine + L-methionine + A + H(+). It participates in cofactor biosynthesis; molybdopterin biosynthesis. Catalyzes the cyclization of GTP to (8S)-3',8-cyclo-7,8-dihydroguanosine 5'-triphosphate. The polypeptide is GTP 3',8-cyclase (Bacillus licheniformis (strain ATCC 14580 / DSM 13 / JCM 2505 / CCUG 7422 / NBRC 12200 / NCIMB 9375 / NCTC 10341 / NRRL NRS-1264 / Gibson 46)).